We begin with the raw amino-acid sequence, 83 residues long: U5-theraphotoxin-Hs1a 4 (83 aa).

The signal sequence occupies residues 1–21 (MKTSMFLTLTGLVLLFVDCYA). The propeptide occupies 22–49 (SESEEKEFPKELLSSIFAADSDFKVEER). 3 cysteine pairs are disulfide-bonded: Cys-51/Cys-63, Cys-56/Cys-68, and Cys-62/Cys-75.

The protein belongs to the neurotoxin 10 (Hwtx-1) family. 51 (Hntx-8) subfamily. Hntx-8 sub-subfamily. As to expression, expressed by the venom gland.

The protein resides in the secreted. In terms of biological role, agglutinates erythrocytes. In Cyriopagopus schmidti (Chinese bird spider), this protein is U5-theraphotoxin-Hs1a 4.